Consider the following 105-residue polypeptide: Thiosulfate sulfurtransferase GlpE (105 aa).

The Rhodanese domain occupies 15-103; it reads MQQGAILVDI…WCRAELPIDT (89 aa). C63 acts as the Cysteine persulfide intermediate in catalysis.

The protein belongs to the GlpE family.

It is found in the cytoplasm. It carries out the reaction thiosulfate + hydrogen cyanide = thiocyanate + sulfite + 2 H(+). The catalysed reaction is thiosulfate + [thioredoxin]-dithiol = [thioredoxin]-disulfide + hydrogen sulfide + sulfite + 2 H(+). Functionally, transferase that catalyzes the transfer of sulfur from thiosulfate to thiophilic acceptors such as cyanide or dithiols. May function in a CysM-independent thiosulfate assimilation pathway by catalyzing the conversion of thiosulfate to sulfite, which can then be used for L-cysteine biosynthesis. This Haemophilus influenzae (strain 86-028NP) protein is Thiosulfate sulfurtransferase GlpE.